The chain runs to 118 residues: UPF0295 protein BcerKBAB4_0454 (118 aa).

2 consecutive transmembrane segments (helical) span residues 12 to 32 (IRTF…LGVF) and 43 to 63 (FMMV…WIGM).

It belongs to the UPF0295 family.

It is found in the cell membrane. The polypeptide is UPF0295 protein BcerKBAB4_0454 (Bacillus mycoides (strain KBAB4) (Bacillus weihenstephanensis)).